A 222-amino-acid polypeptide reads, in one-letter code: Large ribosomal subunit protein uL4 (222 aa).

The protein belongs to the universal ribosomal protein uL4 family. In terms of assembly, part of the 50S ribosomal subunit.

Its function is as follows. One of the primary rRNA binding proteins, this protein initially binds near the 5'-end of the 23S rRNA. It is important during the early stages of 50S assembly. It makes multiple contacts with different domains of the 23S rRNA in the assembled 50S subunit and ribosome. Forms part of the polypeptide exit tunnel. The sequence is that of Large ribosomal subunit protein uL4 from Methylacidiphilum infernorum (isolate V4) (Methylokorus infernorum (strain V4)).